Reading from the N-terminus, the 115-residue chain is MTLKQVIVVRDDLKLSRGKLAVQVAHAAIIGYLKSDSSLRRKWLDEGQKKVVLKVKSLEELLGIKHKAESLGLVTGLVQDAGLTEVPPGTITAVVIGPDEERKIDKVTGNLPLLK.

This sequence belongs to the PTH2 family.

It is found in the cytoplasm. It carries out the reaction an N-acyl-L-alpha-aminoacyl-tRNA + H2O = an N-acyl-L-amino acid + a tRNA + H(+). Functionally, the natural substrate for this enzyme may be peptidyl-tRNAs which drop off the ribosome during protein synthesis. The polypeptide is Peptidyl-tRNA hydrolase (Archaeoglobus fulgidus (strain ATCC 49558 / DSM 4304 / JCM 9628 / NBRC 100126 / VC-16)).